The primary structure comprises 61 residues: Protein translocase subunit SecE (61 aa).

The chain crosses the membrane as a helical span at residues 38-58 (GIGMILIGLIGLVIRMIGYLI).

This sequence belongs to the SecE/SEC61-gamma family. Component of the Sec protein translocase complex. Heterotrimer consisting of SecY (alpha), SecG (beta) and SecE (gamma) subunits. The heterotrimers can form oligomers, although 1 heterotrimer is thought to be able to translocate proteins. Interacts with the ribosome. May interact with SecDF, and other proteins may be involved.

The protein localises to the cell membrane. Its function is as follows. Essential subunit of the Sec protein translocation channel SecYEG. Clamps together the 2 halves of SecY. May contact the channel plug during translocation. In Thermococcus onnurineus (strain NA1), this protein is Protein translocase subunit SecE.